The following is a 479-amino-acid chain: MEAGCEGSSPQTLGERTMGEEGERVKPFTPEKAKEVIMSLQQPAIFCNMVFDWPSRHWTAKHLSKVLEGKQIRFRMGLRSTGTVPQFETECSYVDATLEEFLAWNCDQSRISGPFKKYDHSKFWAYADYKYFVTLFEDKTDVFQEVMWSDFGFPGRNGQESTLWIGSLGAHTPCHLDSYGCNLVFQVQGRKRWHLFPPEDTPFLYPTRIPYEESSVFSKINVVNPDLKRFPQFQKARRHMVTLSPGQVLFVPRHWWHYVESLDPVTVSINSWIELEEDHLARVEEAVTRMLVCTLKTAEDPHHPRTWLNPTEVEETSHEVNSCYLNSAVCAFFDHCERAKEVEMQAPRANGEEPGVQEHMEVEQARDPSSDVGAGKQEAASPFGPDLVPVTPASEERGGALEGDSQECTSRNGEHCAELPCARRQQASKGARAEAGQSAPRYPVAPSRVFVSTDDLLDCLVNPQVTRMVAQLLIQGKSL.

Positions 1–25 are disordered; the sequence is MEAGCEGSSPQTLGERTMGEEGERV. An interaction with HSPB1 region spans residues 88 to 208; sequence ETECSYVDAT…EDTPFLYPTR (121 aa). Positions 124 to 288 constitute a JmjC domain; that stretch reads WAYADYKYFV…HLARVEEAVT (165 aa). A disordered region spans residues 347–412; it reads PRANGEEPGV…GDSQECTSRN (66 aa). Positions 356 to 369 are enriched in basic and acidic residues; it reads VQEHMEVEQARDPS.

In terms of assembly, interacts with CRYAB and HSPB1. As to expression, widely expressed. Highly expressed by Sertoli cells in testis (at protein level).

The protein resides in the cytoplasm. Its function is as follows. May play a role in cellular stress response. The chain is HSPB1-associated protein 1 (Hspbap1) from Rattus norvegicus (Rat).